We begin with the raw amino-acid sequence, 530 residues long: Probable histone-arginine methyltransferase CARMER (530 aa).

The SAM-dependent MTase PRMT-type domain maps to 141–450 (ASQYFQFYGY…QSYDVTIDLH (310 aa)). The S-adenosyl-L-methionine site is built by Q154, R163, G187, E209, E238, and T266. An Asymmetric dimethylarginine; by autocatalysis modification is found at R501.

This sequence belongs to the class I-like SAM-binding methyltransferase superfamily. Protein arginine N-methyltransferase family. In terms of assembly, homodimer. Interacts with EcR. The dimethylated protein is the major form. Present ubiquitously (at protein level). Expressed in the imaginal disks and in larval brains, and to a much lesser degree in the polytene larval tissue such as salivary glands.

The protein localises to the cytoplasm. It is found in the nucleus. The enzyme catalyses L-arginyl-[protein] + 2 S-adenosyl-L-methionine = N(omega),N(omega)-dimethyl-L-arginyl-[protein] + 2 S-adenosyl-L-homocysteine + 2 H(+). Functionally, methylates (mono- and asymmetric dimethylation) the guanidino nitrogens of arginyl residues in proteins. May methylate histone H3 at 'Arg-17' and activate transcription via chromatin remodeling. Coordinates ecdysone-mediated expression of cell death genes. The sequence is that of Probable histone-arginine methyltransferase CARMER (Art4) from Drosophila melanogaster (Fruit fly).